Reading from the N-terminus, the 739-residue chain is Vascular cell adhesion protein 1 (739 aa).

An N-terminal signal peptide occupies residues methionine 1–alanine 24. Ig-like C2-type domains are found at residues serine 25–glutamate 105, glutamine 109–glutamate 212, proline 223–glutamine 309, proline 312–aspartate 399, glutamate 408–tyrosine 506, proline 511–isoleucine 595, and proline 600–aspartate 684. Topologically, residues serine 25–glutamate 698 are extracellular. Intrachain disulfides connect cysteine 47–cysteine 95, cysteine 52–cysteine 99, cysteine 137–cysteine 195, cysteine 246–cysteine 291, and cysteine 335–cysteine 383. N-linked (GlcNAc...) asparagine glycans are attached at residues asparagine 76 and asparagine 77. N-linked (GlcNAc...) asparagine glycosylation is present at asparagine 273. A glycan (N-linked (GlcNAc...) asparagine) is linked at asparagine 531. Cysteine 534 and cysteine 579 are oxidised to a cystine. The chain crosses the membrane as a helical span at residues leucine 699 to alanine 720. At arginine 721–valine 739 the chain is on the cytoplasmic side.

Post-translationally, cleaved by the metalloproteinase ADAM17 to generate the soluble form. Sialoglycoprotein. In terms of processing, ubiquitinated by TRIM65 via 'Lys-48'-linked ubiquitination; leading to proteasomal degradation.

It localises to the cell membrane. Its subcellular location is the secreted. In terms of biological role, cell adhesion glycoprotein predominantly expressed on the surface of endothelial cells that plays an important role in immune surveillance and inflammation. Acts as a major regulator of leukocyte adhesion to the endothelium through interaction with different types of integrins. During inflammatory responses, binds ligands on the surface of activated endothelial cells to initiate the activation of calcium channels and the plasma membrane-associated small GTPase RAC1 leading to leukocyte transendothelial migration. Also serves as a quality-control checkpoint for entry into bone marrow by providing a 'don't-eat-me' stamping in the context of major histocompatibility complex (MHC) class-I presentation. The chain is Vascular cell adhesion protein 1 (VCAM1) from Canis lupus familiaris (Dog).